The chain runs to 608 residues: Glutamine--fructose-6-phosphate aminotransferase [isomerizing] (608 aa).

C2 functions as the Nucleophile; for GATase activity in the catalytic mechanism. In terms of domain architecture, Glutamine amidotransferase type-2 spans 2-217 (CGIVGYSGKK…DKEFVVLTSE (216 aa)). SIS domains follow at residues 285-424 (TKEQ…NKNT) and 453-598 (KVQK…VDKP). K603 (for Fru-6P isomerization activity) is an active-site residue.

As to quaternary structure, homodimer.

The protein resides in the cytoplasm. The catalysed reaction is D-fructose 6-phosphate + L-glutamine = D-glucosamine 6-phosphate + L-glutamate. Functionally, catalyzes the first step in hexosamine metabolism, converting fructose-6P into glucosamine-6P using glutamine as a nitrogen source. The chain is Glutamine--fructose-6-phosphate aminotransferase [isomerizing] from Clostridium acetobutylicum (strain ATCC 824 / DSM 792 / JCM 1419 / IAM 19013 / LMG 5710 / NBRC 13948 / NRRL B-527 / VKM B-1787 / 2291 / W).